Consider the following 314-residue polypeptide: Glucocorticoid receptor (314 aa).

The interval 1–44 (ASAAVSAAPTEKEFPKTHSDVSSEQQNLKGQKGSNGGSMKLHTT) is disordered. A modulating region spans residues 1 to 281 (ASAAVSAAPT…SAATGPPPKL (281 aa)). The segment covering 10–21 (TEKEFPKTHSDV) has biased composition (basic and acidic residues). Phosphoserine is present on residues Ser-65, Ser-73, and Ser-88. Residue Lys-120 forms a Glycyl lysine isopeptide (Lys-Gly) (interchain with G-Cter in SUMO2) linkage. The residue at position 129 (Ser-129) is a Phosphoserine. Glycyl lysine isopeptide (Lys-Gly) (interchain with G-Cter in SUMO); alternate cross-links involve residues Lys-139 and Lys-155. Residues Lys-139 and Lys-155 each participate in a glycyl lysine isopeptide (Lys-Gly) (interchain with G-Cter in SUMO2); alternate cross-link. Position 266 is a phosphoserine (Ser-266). Lys-280 participates in a covalent cross-link: Glycyl lysine isopeptide (Lys-Gly) (interchain with G-Cter in ubiquitin). The segment at 282–314 (CLVCSDEASGCHYGVLTCGSCKVFFKRAVEGQH) adopts an NR C4-type zinc-finger fold. Positions 282-314 (CLVCSDEASGCHYGVLTCGSCKVFFKRAVEGQH) form a DNA-binding region, nuclear receptor.

This sequence belongs to the nuclear hormone receptor family. NR3 subfamily. Heteromultimeric cytoplasmic complex with HSP90AA1, HSPA1A/HSPA1B, and FKBP5 or another immunophilin such as PPID, STIP1, or the immunophilin homolog PPP5C. Upon ligand binding FKBP5 dissociates from the complex and FKBP4 takes its place, thereby linking the complex to dynein and mediating transport to the nucleus, where the complex dissociates. Probably forms a complex composed of chaperones HSP90 and HSP70, co-chaperones CDC37, PPP5C, TSC1 and client protein TSC2, CDK4, AKT, RAF1 and NR3C1; this complex does not contain co-chaperones STIP1/HOP and PTGES3/p23. Directly interacts with UNC45A. Binds to DNA as a homodimer, and as heterodimer with NR3C2 or the retinoid X receptor. Binds STAT5A and STAT5B homodimers and heterodimers. Interacts with NRIP1, POU2F1, POU2F2 and TRIM28. Interacts with several coactivator complexes, including the SMARCA4 complex, CREBBP/EP300, TADA2L (Ada complex) and p160 coactivators such as NCOA2 and NCOA6. Interaction with BAG1 inhibits transactivation. Interacts with HEXIM1 and TGFB1I1. Interacts with NCOA1. Interacts with NCOA3, SMARCA4, SMARCC1, SMARCD1, and SMARCE1. Interacts with CLOCK, CRY1 and CRY2 in a ligand-dependent fashion. Interacts with CIART. Interacts with RWDD3. Interacts with UBE2I/UBC9 and this interaction is enhanced in the presence of RWDD3. Interacts with GRIP1. Interacts with NR4A3 (via nuclear receptor DNA-binding domain), represses transcription activity of NR4A3 on the POMC promoter Nur response element (NurRE). Directly interacts with PNRC2 to attract and form a complex with UPF1 and DCP1A; the interaction leads to rapid mRNA degradation. Interacts with GSK3B. Interacts with FNIP1 and FNIP2. Interacts (via C-terminus) with HNRNPU (via C-terminus). Interacts with MCM3AP. Interacts (via domain NR LBD) with HSP90AA1 and HSP90AB1. In the absence of hormonal ligand, interacts with TACC1. Interacts (via NR LBD domain) with ZNF764 (via KRAB domain); the interaction regulates transcription factor activity of NR3C1 by directing its actions toward certain biologic pathways. In terms of processing, acetylation by CLOCK reduces its binding to glucocorticoid response elements and its transcriptional activity. Increased proteasome-mediated degradation in response to glucocorticoids. Post-translationally, phosphorylated in the absence of hormone; becomes hyperphosphorylated in the presence of glucocorticoid. The Ser-65, Ser-88 and Ser-266-phosphorylated forms are mainly cytoplasmic, and the Ser-73-phosphorylated form is nuclear. Phosphorylation at Ser-73 increases transcriptional activity. Phosphorylation at Ser-65, Ser-88 and Ser-266 decreases signaling capacity. Phosphorylation at Ser-266 may protect from glucocorticoid-induced apoptosis. Phosphorylation at Ser-65 and Ser-73 is not required in regulation of chromosome segregation. May be dephosphorylated by PPP5C, attenuates NR3C1 action. In terms of processing, ubiquitinated by UBR5, leading to its degradation: UBR5 specifically recognizes and binds ligand-bound NR3C1 when it is not associated with coactivators (NCOAs). In presence of NCOAs, the UBR5-degron is not accessible, preventing its ubiquitination and degradation. Sumoylation at Lys-139 and Lys-155 negatively regulates its transcriptional activity. Heat shock increases sumoylation in a RWDD3-dependent manner.

It is found in the cytoplasm. The protein localises to the nucleus. Its subcellular location is the mitochondrion. The protein resides in the cytoskeleton. It localises to the spindle. It is found in the microtubule organizing center. The protein localises to the centrosome. Its subcellular location is the chromosome. The protein resides in the nucleoplasm. Its function is as follows. Receptor for glucocorticoids (GC). Has a dual mode of action: as a transcription factor that binds to glucocorticoid response elements (GRE), both for nuclear and mitochondrial DNA, and as a modulator of other transcription factors. Affects inflammatory responses, cellular proliferation and differentiation in target tissues. Involved in chromatin remodeling. Plays a role in rapid mRNA degradation by binding to the 5' UTR of target mRNAs and interacting with PNRC2 in a ligand-dependent manner which recruits the RNA helicase UPF1 and the mRNA-decapping enzyme DCP1A, leading to RNA decay. Could act as a coactivator for STAT5-dependent transcription upon growth hormone (GH) stimulation and could reveal an essential role of hepatic GR in the control of body growth. Mediates glucocorticoid-induced apoptosis. Promotes accurate chromosome segregation during mitosis. May act as a tumor suppressor. May play a negative role in adipogenesis through the regulation of lipolytic and antilipogenic gene expression. The chain is Glucocorticoid receptor (NR3C1) from Ovis aries (Sheep).